The sequence spans 3230 residues: Helicase SRCAP (3230 aa).

A disordered region spans residues 1–71; the sequence is MQSSPSPAHP…GPPDGATVPL (71 aa). Residues 26–41 show a composition bias toward low complexity; it reads GSNPVSPASSSSPASS. In terms of domain architecture, HSA spans 124 to 196; it reads LPKVPEPPRP…EQAKLRRIAS (73 aa). Disordered stretches follow at residues 253-547 and 559-581; these read QPLT…EEDD and EEQS…LGPK. Residues 257 to 273 are compositionally biased toward low complexity; it reads SSKAGSSPCLGSSSAAS. Residues 283–313 show a composition bias toward acidic residues; that stretch reads DDEDGDFQPQEDEEEDDEETIEVEEQQEGND. Basic and acidic residues predominate over residues 315–329; the sequence is EAQRREIELLRREGE. Over residues 337 to 356 the composition is skewed to low complexity; that stretch reads RSLPPQLLEGPSSPSQTPSS. The span at 397-425 shows a compositional bias: acidic residues; it reads DEDDEEFTANEEEAEDEEDTIAAEEQLEG. Positions 426 to 441 are enriched in basic and acidic residues; sequence EVDHAMELSELAREGE. 3 stretches are compositionally biased toward acidic residues: residues 462–490, 503–517, and 524–533; these read SEDE…EPPQ, RSED…EEET, and EESESEESED. A Helicase ATP-binding domain is found at 630 to 795; it reads VTMYEKKLNG…WSLMHFLMPH (166 aa). An ATP-binding site is contributed by 643–650; that stretch reads DEMGLGKT. 3 disordered regions span residues 1017-1045, 1058-1125, and 1138-1166; these read APLG…PQVL, PPLI…PGSS, and TFPP…TPAP. Pro residues-rich tracts occupy residues 1018–1030 and 1058–1076; these read PLGP…PPGP and PPLI…PPLQ. The segment covering 1093–1107 has biased composition (low complexity); the sequence is LSGTSRPPTPTLSLK. Residues 1108–1123 are compositionally biased toward pro residues; sequence PTPPAPVRLSPAPPPG. Low complexity predominate over residues 1138–1160; sequence TFPPAAATTTSTTTATATTTAVP. Residue S1172 is modified to Phosphoserine. Disordered stretches follow at residues 1320–1366, 1406–1425, 1629–1760, and 1839–1893; these read GLTP…APMP, SLPG…PLAS, VPVM…ASPV, and SRLP…EEKR. Residues 1323-1336 show a composition bias toward pro residues; that stretch reads PVPPLAPAPRPPSS. The segment covering 1337-1360 has biased composition (low complexity); the sequence is GLPAVLNPRPTLTPGRLPTPTLGT. Over residues 1675-1691 the composition is skewed to low complexity; that stretch reads PASTQTLALAPALAPTL. Residues 1692–1733 show a composition bias toward polar residues; that stretch reads GGSSPSQTLSLGTGNPQGPFPTQTLSLTPASSLVPTPAQTLS. Positions 1750 to 1760 are enriched in pro residues; the sequence is PAPPLAPASPV. Residues 2044–2197 enclose the Helicase C-terminal domain; that stretch reads KLQTLAVLLR…DMAIEGGNFT (154 aa). Disordered stretches follow at residues 2214–2233, 2271–2298, 2327–2453, 2564–2583, 2598–3081, and 3095–3230; these read LEEP…EETV, FNEN…MSRA, VSRE…APAA, LELA…VPPK, KNLS…GRKS, and DLAD…KAKT. Positions 2215–2225 are enriched in low complexity; that stretch reads EEPSSSSVPSA. Composition is skewed to basic and acidic residues over residues 2284–2298, 2327–2358, and 2386–2403; these read EAGR…MSRA, VSRE…RLPQ, and KAPE…RGAR. The span at 2438–2448 shows a compositional bias: pro residues; sequence RPAPRPRPTPA. Composition is skewed to low complexity over residues 2564-2579 and 2600-2611; these read LELA…SLSL and LSLTPSAPSLTL. The segment covering 2669 to 2679 has biased composition (basic and acidic residues); sequence EADRTSEELTE. Residues 2694–2712 show a composition bias toward low complexity; the sequence is VTAEVAAPSTSSSATSSPE. Polar residues predominate over residues 2782–2794; it reads SETSASPGSPSVR. Low complexity predominate over residues 2807–2817; that stretch reads GPCEAAPSSSL. Residues 2856-2868 are compositionally biased toward basic residues; sequence VKRRRGRPPKKNR. The a.T hook 1 DNA-binding region spans 2857-2869; that stretch reads KRRRGRPPKKNRS. Residues 2913–2926 are compositionally biased toward pro residues; the sequence is IPGPQPLGPQPVHR. Positions 2936 to 2948 form a DNA-binding region, a.T hook 2; it reads KRRRGRPPKARDL. Residues 2953–2965 show a composition bias toward polar residues; it reads TISSAGDGNSESR. The segment covering 2967–2982 has biased composition (pro residues); sequence QPPPHPSPLTPLPPLL. Residues 2983–3002 are compositionally biased toward low complexity; the sequence is VCPTATVANTVTTVTISTSP. The segment at residues 3004-3016 is a DNA-binding region (a.T hook 3); sequence KRKRGRPPKNPPS. The segment covering 3011-3020 has biased composition (pro residues); the sequence is PKNPPSPRPS. Residues 3044–3053 show a composition bias toward low complexity; the sequence is PQGQGESEGS. Positions 3168–3184 are enriched in acidic residues; it reads SVEESEAEASGEEEEGD.

It belongs to the SNF2/RAD54 helicase family. SWR1 subfamily. As to quaternary structure, interacts with CREBBP and EP300. May be part of a complex containing SRCAP, CREBBP, CARM1 and GRIP1. Component of the chromatin-remodeling SRCAP complex composed of at least SRCAP, DMAP1, RUVBL1, RUVBL2, ACTL6A, YEATS4, VPS72, ACTR6 and ZNHIT1. Component of a NuA4-related complex which contains EP400, TRRAP/PAF400, SRCAP, BRD8/SMAP, EPC1, DMAP1/DNMAP1, RUVBL1/TIP49, RUVBL2, actin, ACTL6A/BAF53A, VPS72 and YEATS4/GAS41. In terms of assembly, (Microbial infection) Interacts with hepatitis C virus (HCV) NS5A. (Microbial infection) Interacts with human adenovirus 2 DBP.

The protein resides in the nucleus. Functionally, catalytic component of the SRCAP complex which mediates the ATP-dependent exchange of histone H2AZ/H2B dimers for nucleosomal H2A/H2B, leading to transcriptional regulation of selected genes by chromatin remodeling. Acts as a coactivator for CREB-mediated transcription, steroid receptor-mediated transcription, and Notch-mediated transcription. The sequence is that of Helicase SRCAP (SRCAP) from Homo sapiens (Human).